Consider the following 155-residue polypeptide: MSRRGTAEEKTAKSDPIYRNRLVNMLVNRILKHGKKSLAYQIIYRALKKIQQKTETNPLSVLRQAIRGVTPDIAVKARRVGGSTHQVPIEIGSTQGKALAIRWLLGASRKRPGRNMAFKLSSELVDAAKGSGDAIRKKEETHRMAEANRAFAHFR.

It belongs to the universal ribosomal protein uS7 family. In terms of assembly, part of the 30S ribosomal subunit.

The protein resides in the plastid. It localises to the chloroplast. In terms of biological role, one of the primary rRNA binding proteins, it binds directly to 16S rRNA where it nucleates assembly of the head domain of the 30S subunit. This Crucihimalaya wallichii (Rock-cress) protein is Small ribosomal subunit protein uS7cz/uS7cy (rps7-A).